Reading from the N-terminus, the 119-residue chain is Large ribosomal subunit protein uL18 (119 aa).

Belongs to the universal ribosomal protein uL18 family. As to quaternary structure, part of the 50S ribosomal subunit; part of the 5S rRNA/L5/L18/L25 subcomplex. Contacts the 5S and 23S rRNAs.

Functionally, this is one of the proteins that bind and probably mediate the attachment of the 5S RNA into the large ribosomal subunit, where it forms part of the central protuberance. The chain is Large ribosomal subunit protein uL18 from Clostridium botulinum (strain 657 / Type Ba4).